Here is a 276-residue protein sequence, read N- to C-terminus: 2-dehydro-3-deoxyphosphooctonate aldolase (276 aa).

Belongs to the KdsA family.

It is found in the cytoplasm. The catalysed reaction is D-arabinose 5-phosphate + phosphoenolpyruvate + H2O = 3-deoxy-alpha-D-manno-2-octulosonate-8-phosphate + phosphate. Its pathway is carbohydrate biosynthesis; 3-deoxy-D-manno-octulosonate biosynthesis; 3-deoxy-D-manno-octulosonate from D-ribulose 5-phosphate: step 2/3. It participates in bacterial outer membrane biogenesis; lipopolysaccharide biosynthesis. This Helicobacter pylori (strain Shi470) protein is 2-dehydro-3-deoxyphosphooctonate aldolase.